A 121-amino-acid polypeptide reads, in one-letter code: Copper transport protein CCH (121 aa).

At Ala2 the chain carries N-acetylalanine. The 64-residue stretch at 2–65 (AQTVVLKVGM…TVSKTGKKTS (64 aa)) folds into the HMA domain. Cu cation contacts are provided by Cys13 and Cys16. Positions 70–121 (EAEAEPKAEADPKVETVTETKTEAETKTEAKVDAKADVEPKAAEAETKPSQV) are disordered. Residues 73 to 121 (AEPKAEADPKVETVTETKTEAETKTEAKVDAKADVEPKAAEAETKPSQV) show a composition bias toward basic and acidic residues.

The protein belongs to the ATX1 family. Requires Cu cation as cofactor. Expressed in phloem (at protein level).

Functionally, involved in copper homeostasis. Can complement the yeast mutants atx1 and sod1. This Arabidopsis thaliana (Mouse-ear cress) protein is Copper transport protein CCH (CCH).